The primary structure comprises 223 residues: Alpha-S2-casein (223 aa).

Residues 1-15 (MKFFIFTCLLAVALA) form the signal peptide. A phosphoserine mark is found at Ser-23, Ser-24, Ser-25, Ser-72, Ser-73, Ser-74, Ser-77, Ser-145, Ser-147, Ser-151, and Ser-159. A repeat spans 77 to 141 (SAEVAPEEVK…AGPFTPTVNR (65 aa)). The stretch at residues 159 to 223 (STEVFTKKTK…TNAIPYVRYL (65 aa)) is a repeat.

Belongs to the alpha-casein family. As to expression, mammary gland specific. Secreted in milk.

The protein resides in the secreted. Its function is as follows. Important role in the capacity of milk to transport calcium phosphate. In Ovis aries (Sheep), this protein is Alpha-S2-casein (CSN1S2).